The sequence spans 381 residues: Homoserine O-succinyltransferase (381 aa).

The 316-residue stretch at 45-360 (NAVLVCHALN…PHGHDAFLLD (316 aa)) folds into the AB hydrolase-1 domain. The active-site Nucleophile is Ser151. Arg221 contacts substrate. Residues Asp321 and His354 contribute to the active site. Asp355 is a substrate binding site.

This sequence belongs to the AB hydrolase superfamily. MetX family. As to quaternary structure, homodimer.

The protein localises to the cytoplasm. It carries out the reaction L-homoserine + succinyl-CoA = O-succinyl-L-homoserine + CoA. It functions in the pathway amino-acid biosynthesis; L-methionine biosynthesis via de novo pathway; O-succinyl-L-homoserine from L-homoserine: step 1/1. Functionally, transfers a succinyl group from succinyl-CoA to L-homoserine, forming succinyl-L-homoserine. The protein is Homoserine O-succinyltransferase of Burkholderia pseudomallei (strain 1710b).